A 1020-amino-acid chain; its full sequence is UPF0182 protein jk1603 (1020 aa).

Over residues 1 to 18 (MSTPTPPSSGRPKQPFPS) the composition is skewed to pro residues. Residues 1 to 23 (MSTPTPPSSGRPKQPFPSSPGSS) form a disordered region. Helical transmembrane passes span 28–48 (ILGI…VVVS), 73–93 (LVLF…AAFL), 125–145 (FLVG…QSNW), 175–195 (LPFL…AFVI), 227–247 (LAVI…FDRY), 272–292 (QIVL…TIVL), and 300–320 (LAVA…PAML). The interval 924–998 (QEIDGSVVDP…KVNKTRESGT (75 aa)) is disordered. Composition is skewed to basic and acidic residues over residues 942 to 961 (KGDK…EQSS) and 969 to 998 (KSDD…ESGT).

The protein belongs to the UPF0182 family.

It localises to the cell membrane. This Corynebacterium jeikeium (strain K411) protein is UPF0182 protein jk1603.